The following is a 141-amino-acid chain: ATP synthase epsilon chain (141 aa).

Belongs to the ATPase epsilon chain family. F-type ATPases have 2 components, CF(1) - the catalytic core - and CF(0) - the membrane proton channel. CF(1) has five subunits: alpha(3), beta(3), gamma(1), delta(1), epsilon(1). CF(0) has three main subunits: a, b and c.

It localises to the cell inner membrane. Its function is as follows. Produces ATP from ADP in the presence of a proton gradient across the membrane. The protein is ATP synthase epsilon chain of Pseudomonas fluorescens (strain ATCC BAA-477 / NRRL B-23932 / Pf-5).